Reading from the N-terminus, the 285-residue chain is Shikimate dehydrogenase (NADP(+)) (285 aa).

Shikimate is bound by residues 20–22 and Thr67; that span reads SLS. Lys71 serves as the catalytic Proton acceptor. Glu83 provides a ligand contact to NADP(+). Positions 92 and 107 each coordinate shikimate. NADP(+)-binding positions include 132 to 136 and Leu230; that span reads GAGGA. Tyr232 contacts shikimate. Gly253 serves as a coordination point for NADP(+).

This sequence belongs to the shikimate dehydrogenase family. As to quaternary structure, homodimer.

It catalyses the reaction shikimate + NADP(+) = 3-dehydroshikimate + NADPH + H(+). Its pathway is metabolic intermediate biosynthesis; chorismate biosynthesis; chorismate from D-erythrose 4-phosphate and phosphoenolpyruvate: step 4/7. Functionally, involved in the biosynthesis of the chorismate, which leads to the biosynthesis of aromatic amino acids. Catalyzes the reversible NADPH linked reduction of 3-dehydroshikimate (DHSA) to yield shikimate (SA). The polypeptide is Shikimate dehydrogenase (NADP(+)) (Salinibacter ruber (strain DSM 13855 / M31)).